A 491-amino-acid chain; its full sequence is 1-aminocyclopropane-1-carboxylate synthase (491 aa).

Lys278 is modified (N6-(pyridoxal phosphate)lysine).

Belongs to the class-I pyridoxal-phosphate-dependent aminotransferase family. As to quaternary structure, homodimer. Pyridoxal 5'-phosphate serves as cofactor.

It catalyses the reaction S-adenosyl-L-methionine = 1-aminocyclopropane-1-carboxylate + S-methyl-5'-thioadenosine + H(+). The protein operates within alkene biosynthesis; ethylene biosynthesis via S-adenosyl-L-methionine; ethylene from S-adenosyl-L-methionine: step 1/2. Functionally, catalyzes the formation of 1-aminocyclopropane-1-carboxylate, a direct precursor of ethylene in higher plants. The chain is 1-aminocyclopropane-1-carboxylate synthase (ACS1) from Nicotiana tabacum (Common tobacco).